The following is a 268-amino-acid chain: Small ribosomal subunit protein eS1 (268 aa).

The interval 1–21 (MAVGKNKGLSKGGKKGGKKKV) is disordered.

Belongs to the eukaryotic ribosomal protein eS1 family. As to quaternary structure, component of the small ribosomal subunit. Mature ribosomes consist of a small (40S) and a large (60S) subunit. The 40S subunit contains about 33 different proteins and 1 molecule of RNA (18S). The 60S subunit contains about 49 different proteins and 3 molecules of RNA (28S, 5.8S and 5S).

Its subcellular location is the cytoplasm. Essential for oogenesis; required for late follicle cell development. The sequence is that of Small ribosomal subunit protein eS1 from Drosophila persimilis (Fruit fly).